We begin with the raw amino-acid sequence, 1415 residues long: DNA-directed RNA polymerase subunit beta' (1415 aa).

Residues Cys70, Cys72, Cys85, and Cys88 each coordinate Zn(2+). The Mg(2+) site is built by Asp461, Asp463, and Asp465. Cys820, Cys894, Cys901, and Cys904 together coordinate Zn(2+).

It belongs to the RNA polymerase beta' chain family. As to quaternary structure, the RNAP catalytic core consists of 2 alpha, 1 beta, 1 beta' and 1 omega subunit. When a sigma factor is associated with the core the holoenzyme is formed, which can initiate transcription. It depends on Mg(2+) as a cofactor. Requires Zn(2+) as cofactor.

The enzyme catalyses RNA(n) + a ribonucleoside 5'-triphosphate = RNA(n+1) + diphosphate. DNA-dependent RNA polymerase catalyzes the transcription of DNA into RNA using the four ribonucleoside triphosphates as substrates. The protein is DNA-directed RNA polymerase subunit beta' of Cupriavidus necator (strain ATCC 17699 / DSM 428 / KCTC 22496 / NCIMB 10442 / H16 / Stanier 337) (Ralstonia eutropha).